The primary structure comprises 466 residues: 3-isopropylmalate dehydratase large subunit (466 aa).

The [4Fe-4S] cluster site is built by C347, C407, and C410.

This sequence belongs to the aconitase/IPM isomerase family. LeuC type 1 subfamily. As to quaternary structure, heterodimer of LeuC and LeuD. [4Fe-4S] cluster is required as a cofactor.

The catalysed reaction is (2R,3S)-3-isopropylmalate = (2S)-2-isopropylmalate. The protein operates within amino-acid biosynthesis; L-leucine biosynthesis; L-leucine from 3-methyl-2-oxobutanoate: step 2/4. Functionally, catalyzes the isomerization between 2-isopropylmalate and 3-isopropylmalate, via the formation of 2-isopropylmaleate. This is 3-isopropylmalate dehydratase large subunit from Cronobacter sakazakii (strain ATCC BAA-894) (Enterobacter sakazakii).